A 283-amino-acid polypeptide reads, in one-letter code: NFU1 iron-sulfur cluster scaffold homolog, mitochondrial (283 aa).

The transit peptide at 1–65 (MSKFLSQAAI…ELRMPVACRR (65 aa)) directs the protein to the mitochondrion. Positions 182 to 250 (IKELLDTRIR…IPEVESVEQV (69 aa)) are nifU. [4Fe-4S] cluster is bound by residues C219 and C222.

It belongs to the NifU family.

The protein resides in the mitochondrion. Functionally, molecular scaffold for [Fe-S] cluster assembly of mitochondrial iron-sulfur proteins. In Drosophila simulans (Fruit fly), this protein is NFU1 iron-sulfur cluster scaffold homolog, mitochondrial.